The chain runs to 294 residues: MVAITAAMVGELRAKTDAPMMECKKALTEADGDMARAEEILRVKLGSKAGKAASRVTAEGIVAASINSTTGALLEVNCETDFVSKNDDFLAFANDCVKLVAEKNPADVAALLALPLNGQTVDEVRSALIGKIGENIMPRHFKRFAGSNKLVSYLHGTRIGVVVEFEGDDTAAKDVAMHIAAMKPVALSMADVPAEAIAVERSVAVQKAAESGKPPEIVEKMVEGSIQKYLKEVSLLNQTFVKNDKQTVEQMLKAANTTIKGFTMFVVGEGIEKRQDDFAAEVAAQVAAASKATA.

The interval 80 to 83 (TDFV) is involved in Mg(2+) ion dislocation from EF-Tu.

Belongs to the EF-Ts family.

It is found in the cytoplasm. Associates with the EF-Tu.GDP complex and induces the exchange of GDP to GTP. It remains bound to the aminoacyl-tRNA.EF-Tu.GTP complex up to the GTP hydrolysis stage on the ribosome. This Polynucleobacter necessarius subsp. necessarius (strain STIR1) protein is Elongation factor Ts.